The chain runs to 190 residues: Holliday junction branch migration complex subunit RuvA (190 aa).

A domain I region spans residues 1–64 (MIGRITGTLI…EDAQLLYGFG (64 aa)). The tract at residues 65–137 (SSAERSTFRE…MRGKLGADIG (73 aa)) is domain II. The interval 137–141 (GATPH) is flexible linker. The tract at residues 142–190 (AASGHQSDILNALLALGYSDKESQAALKKLPDGVDVSEGIRLALKALVR) is domain III.

It belongs to the RuvA family. Homotetramer. Forms an RuvA(8)-RuvB(12)-Holliday junction (HJ) complex. HJ DNA is sandwiched between 2 RuvA tetramers; dsDNA enters through RuvA and exits via RuvB. An RuvB hexamer assembles on each DNA strand where it exits the tetramer. Each RuvB hexamer is contacted by two RuvA subunits (via domain III) on 2 adjacent RuvB subunits; this complex drives branch migration. In the full resolvosome a probable DNA-RuvA(4)-RuvB(12)-RuvC(2) complex forms which resolves the HJ.

The protein localises to the cytoplasm. Functionally, the RuvA-RuvB-RuvC complex processes Holliday junction (HJ) DNA during genetic recombination and DNA repair, while the RuvA-RuvB complex plays an important role in the rescue of blocked DNA replication forks via replication fork reversal (RFR). RuvA specifically binds to HJ cruciform DNA, conferring on it an open structure. The RuvB hexamer acts as an ATP-dependent pump, pulling dsDNA into and through the RuvAB complex. HJ branch migration allows RuvC to scan DNA until it finds its consensus sequence, where it cleaves and resolves the cruciform DNA. The chain is Holliday junction branch migration complex subunit RuvA from Bordetella pertussis (strain Tohama I / ATCC BAA-589 / NCTC 13251).